A 1120-amino-acid chain; its full sequence is MSSLSRELVFLILQFLDEEKFKETVHKLEQESGFFFNMKYFEDEVHNGNWDEVEKYLSGFTKVDDNRYSMKIFFEIRKQKYLEALDRHDRPKAVDILVKDLKVFSTFNEELFKEITQLLTLENFRENEQLSKYGDTKSARAIMLVELKKLIEANPLFRDKLQFPTLRTSRLRTLINQSLNWQHQLCKNPRPNPDIKTLFVDHSCRLPNDARAPSPVNNPLLGSLPKAEGFPPLGAHGPFQPTPSPVPTPLAGWMSSPSSVPHPAVSGGPIALGAPSIQAALKHPRTPPSNSAVDYPSGDSDHVSKRTRPMGISDEVSLGVNMLPMTFPGQAHGHNQTFKAPDDLPKTVARTLSQGSSPMSMDFHPIKQTLLLVGTNVGDIGLWEVGSRERLVQKTFKVWDLSKCSMPLQAALVKEPVVSVNRVIWSPDGSLFGVAYSRHIVQLYSYHGGEDMRQHLEIDAHVGGVNDIAFSTPNKQLCVTTCGDDKTIKVWDAATGVKRYTFEGHEAPVYSICPHYKENIQFIFSTALDGKIKAWLYDNMGSRVDYEAPGRWCTTMAYSADGTRLFSCGTSKDGESFIVEWNESEGAVKRTYQGFHKRSLGVVQFDTTKNRYLAAGDDFSIKFWDMDTIQLLTAIDADGGLQASPRIRFNKEGSLLAVSANDNMIKVMANSDGLRLLHTVENLSSESSKPAINSIPMVERPASVVSIPGMNGDSRNMVDVKPVITEESNDKSKVWKLTEVGEPSQCRSLRLPENMRVTKISRLIFTNSGNAILALASNAIHLLWKWQRNDRNATGKATASLPPQQWQPASGILMTNDVAETNPEEAVPCFALSKNDSYVMSASGGKISLFNMMTFKTMATFMPPPPAATFLAFHPQDNNIIAIGMDDSTIQIYNVRVDEVKSKLKGHSKRITGLAFSNVLNVLVSSGADAQLCVWNTDGWEKQKSKVLQIPQGRSTSSLSDTRVQFHQDQVHFLVVHETQLAIYETTKLECMKQWPVRESAAPITHATFSCDSQLIYTSFMDATICVFSSANLRLRCRVNPSAYLPASLSNSNVHPLVIAAHPQESNMFAVGLSDGGVHIFEPLESEGKWGVAPPPENGSASAVTATPSVGASASDQPQR.

Residues 4–36 (LSRELVFLILQFLDEEKFKETVHKLEQESGFFF) form the LisH domain. Residues 34-92 (FFFNMKYFEDEVHNGNWDEVEKYLSGFTKVDDNRYSMKIFFEIRKQKYLEALDRHDRPK) form the CTLH domain. Disordered regions lie at residues 210 to 235 (ARAPSPVNNPLLGSLPKAEGFPPLGA) and 283 to 307 (HPRTPPSNSAVDYPSGDSDHVSKRT). At Ser-214 the chain carries Phosphoserine. WD repeat units lie at residues 353–393 (SQGS…RLVQ), 415–454 (EPVVSVNRVIWSPDGSLFGVAYSRHIVQLYSYHGGEDMRQ), 460–501 (AHVG…KRYT), 504–545 (GHEA…SRVD), 548–591 (APGR…VKRT), 595–634 (FHKRSLGVVQFDTTKNRYLAAGDDFSIKFWDMDTIQLLTA), 639–678 (GGLQASPRIRFNKEGSLLAVSANDNMIKVMANSDGLRLLH), 699–745 (ERPA…EPSQ), 755–794 (MRVTKISRLIFTNSGNAILALASNAIHLLWKWQRNDRNAT), 822–860 (NPEEAVPCFALSKNDSYVMSASGGKISLFNMMTFKTMAT), 863–903 (PPPP…VKSK), 906–945 (GHSKRITGLAFSNVLNVLVSSGADAQLCVWNTDGWEKQKS), 999–1038 (ESAAPITHATFSCDSQLIYTSFMDATICVFSSANLRLRCR), and 1052–1091 (SNVHPLVIAAHPQESNMFAVGLSDGGVHIFEPLESEGKWG). The disordered stretch occupies residues 1087-1120 (EGKWGVAPPPENGSASAVTATPSVGASASDQPQR). A compositionally biased stretch (polar residues) spans 1099–1120 (GSASAVTATPSVGASASDQPQR).

In terms of assembly, tetramer. Interacts with SNC1 (via TIR domain) and HDA19. Interacts with SPL (via EAR motif). Interacts with SPEAR3/TIE1. Binds to and corepresses GAF1/IDD2. In terms of tissue distribution, highly expressed in stamen primordium, microsporocyte, ovule primordium and megasporocyte during sporogenesis.

It is found in the nucleus. Its function is as follows. Transcriptional corepressor. Activates TIR-NB-LRR R protein-mediated immune responses through repression of negative regulators such as CNGC2/DND1. Negative regulator of jasmonate responses. The sequence is that of Topless-related protein 1 (TPR1) from Arabidopsis thaliana (Mouse-ear cress).